The chain runs to 706 residues: Glycogen [starch] synthase (706 aa).

Arg26 serves as a coordination point for UDP. UDP-alpha-D-glucose contacts are provided by His191 and Arg197. Alpha-D-glucose 6-phosphate contacts are provided by His277, Glu278, Gln280, His283, and Lys287. Position 317 (Arg317) interacts with UDP. Arg317 serves as a coordination point for UDP-alpha-D-glucose. His491 is an alpha-D-glucose 6-phosphate binding site. Positions 500, 502, and 503 each coordinate UDP-alpha-D-glucose. Residue Thr505 coordinates UDP. The alpha-D-glucose 6-phosphate site is built by Arg572 and Arg576. Positions 670–706 are disordered; that stretch reads PEEEDPEEYPFPLTLKQRTGPGSPLDSIQGLQLNGTR.

It belongs to the glycosyltransferase 3 family. Interacts with glucogenin gnn; the interaction is direct.

The enzyme catalyses [(1-&gt;4)-alpha-D-glucosyl](n) + UDP-alpha-D-glucose = [(1-&gt;4)-alpha-D-glucosyl](n+1) + UDP + H(+). It functions in the pathway glycan biosynthesis; glycogen biosynthesis. Its activity is regulated as follows. Allosteric activation by glucose-6-phosphate, and phosphorylation by a cAMP-dependent kinase. Functionally, glycogen synthase participates in the glycogen biosynthetic process along with glycogenin and glycogen branching enzyme. Extends the primer composed of a few glucose units formed by glycogenin by adding new glucose units to it. In this context, glycogen synthase transfers the glycosyl residue from UDP-Glc to the non-reducing end of alpha-1,4-glucan. This is Glycogen [starch] synthase (gsy-1) from Neurospora crassa (strain ATCC 24698 / 74-OR23-1A / CBS 708.71 / DSM 1257 / FGSC 987).